A 402-amino-acid polypeptide reads, in one-letter code: Caspase-1 (402 aa).

Positions Met1–Ser91 constitute a CARD domain. Residues Met1 to Leu118 constitute a propeptide that is removed on maturation. Active-site residues include His236 and Cys284. The propeptide occupies Ser297–Asp314. A Phosphoserine modification is found at Ser301.

It belongs to the peptidase C14A family. As to quaternary structure, heterotetramer that consists of two anti-parallel arranged heterodimers, each one formed by a 20 kDa (Caspase-1 subunit p20) and a 10 kDa (Caspase-1 subunit p10) subunit. May be a component of the inflammasome, a protein complex which also includes PYCARD, CARD8 and NLRP2 and whose function would be the activation of pro-inflammatory caspases. Component of the AIM2 PANoptosome complex, a multiprotein complex that drives inflammatory cell death (PANoptosis). Both the p10 and p20 subunits interact with MEFV. Interacts with CARD17P/INCA and CARD18. Interacts with SERPINB1; this interaction regulates CASP1 activity. Heterotetramer that consists of two anti-parallel arranged heterodimers, each one formed by a 20 kDa (Caspase-1 subunit p20) and a 10 kDa (Caspase-1 subunit p10) subunit. The two subunits are derived from the precursor sequence by an autocatalytic mechanism. In terms of processing, ubiquitinated via 'Lys-11'-linked polyubiquitination. Deubiquitinated by USP8.

The protein localises to the cytoplasm. It is found in the cell membrane. It carries out the reaction Strict requirement for an Asp residue at position P1 and has a preferred cleavage sequence of Tyr-Val-Ala-Asp-|-.. Thiol protease involved in a variety of inflammatory processes by proteolytically cleaving other proteins, such as the precursors of the inflammatory cytokines interleukin-1 beta (IL1B) and interleukin 18 (IL18) as well as the pyroptosis inducer Gasdermin-D (GSDMD), into active mature peptides. Plays a key role in cell immunity as an inflammatory response initiator: once activated through formation of an inflammasome complex, it initiates a pro-inflammatory response through the cleavage of the two inflammatory cytokines IL1B and IL18, releasing the mature cytokines which are involved in a variety of inflammatory processes. Cleaves a tetrapeptide after an Asp residue at position P1. Also initiates pyroptosis, a programmed lytic cell death pathway, through cleavage of GSDMD. In contrast to cleavage of interleukin IL1B, recognition and cleavage of GSDMD is not strictly dependent on the consensus cleavage site but depends on an exosite interface on CASP1 that recognizes and binds the Gasdermin-D, C-terminal (GSDMD-CT) part. Cleaves and activates CASP7 in response to bacterial infection, promoting plasma membrane repair. Upon inflammasome activation, during DNA virus infection but not RNA virus challenge, controls antiviral immunity through the cleavage of CGAS, rendering it inactive. In apoptotic cells, cleaves SPHK2 which is released from cells and remains enzymatically active extracellularly. The protein is Caspase-1 (Casp1) of Rattus norvegicus (Rat).